The following is a 104-amino-acid chain: Large ribosomal subunit protein uL24 (104 aa).

This sequence belongs to the universal ribosomal protein uL24 family. In terms of assembly, part of the 50S ribosomal subunit.

In terms of biological role, one of two assembly initiator proteins, it binds directly to the 5'-end of the 23S rRNA, where it nucleates assembly of the 50S subunit. Its function is as follows. One of the proteins that surrounds the polypeptide exit tunnel on the outside of the subunit. The chain is Large ribosomal subunit protein uL24 from Bradyrhizobium sp. (strain ORS 278).